Consider the following 878-residue polypeptide: Alanine--tRNA ligase (878 aa).

Zn(2+) is bound by residues His-566, His-570, Cys-668, and His-672. The interval 846–866 is disordered; that stretch reads GGGRPDMAQAGGKQPEKLEEA.

Belongs to the class-II aminoacyl-tRNA synthetase family. Zn(2+) serves as cofactor.

It localises to the cytoplasm. The enzyme catalyses tRNA(Ala) + L-alanine + ATP = L-alanyl-tRNA(Ala) + AMP + diphosphate. Its function is as follows. Catalyzes the attachment of alanine to tRNA(Ala) in a two-step reaction: alanine is first activated by ATP to form Ala-AMP and then transferred to the acceptor end of tRNA(Ala). Also edits incorrectly charged Ser-tRNA(Ala) and Gly-tRNA(Ala) via its editing domain. The sequence is that of Alanine--tRNA ligase from Bacillus pumilus (strain SAFR-032).